Reading from the N-terminus, the 112-residue chain is Small ribosomal subunit protein uS17 (112 aa).

This sequence belongs to the universal ribosomal protein uS17 family. Part of the 30S ribosomal subunit.

One of the primary rRNA binding proteins, it binds specifically to the 5'-end of 16S ribosomal RNA. In Haloarcula marismortui (strain ATCC 43049 / DSM 3752 / JCM 8966 / VKM B-1809) (Halobacterium marismortui), this protein is Small ribosomal subunit protein uS17.